Reading from the N-terminus, the 412-residue chain is Mitochondrial distribution and morphology protein 12 (412 aa).

The region spanning 1 to 410 (MSIDLEWAKL…FPNFHTLVMG (410 aa)) is the SMP-LTD domain. Disordered regions lie at residues 66–96 (EDDEDDSSTSPVKVTEGQLDAHGGEDDDGYE), 108–136 (YTEGGGHGGNGSHLPMHLRHPPLRSSPTD), 166–238 (QGSG…QQEN), and 314–354 (PAGD…KPLP). The segment covering 220-238 (NQPVFPSQQPQQQQPQQEN) has biased composition (low complexity).

It belongs to the MDM12 family. In terms of assembly, component of the ER-mitochondria encounter structure (ERMES) or MDM complex, composed of MMM1, MDM10, MDM12 and MDM34. An MMM1 homodimer associates with one molecule of MDM12 on each side in a pairwise head-to-tail manner, and the SMP-LTD domains of MMM1 and MDM12 generate a continuous hydrophobic tunnel for phospholipid trafficking.

The protein resides in the mitochondrion outer membrane. It is found in the endoplasmic reticulum membrane. Component of the ERMES/MDM complex, which serves as a molecular tether to connect the endoplasmic reticulum (ER) and mitochondria. Components of this complex are involved in the control of mitochondrial shape and protein biogenesis, and function in nonvesicular lipid trafficking between the ER and mitochondria. MDM12 is required for the interaction of the ER-resident membrane protein MMM1 and the outer mitochondrial membrane-resident beta-barrel protein MDM10. The MDM12-MMM1 subcomplex functions in the major beta-barrel assembly pathway that is responsible for biogenesis of all mitochondrial outer membrane beta-barrel proteins, and acts in a late step after the SAM complex. The MDM10-MDM12-MMM1 subcomplex further acts in the TOM40-specific pathway after the action of the MDM12-MMM1 complex. Essential for establishing and maintaining the structure of mitochondria and maintenance of mtDNA nucleoids. The sequence is that of Mitochondrial distribution and morphology protein 12 from Coprinopsis cinerea (strain Okayama-7 / 130 / ATCC MYA-4618 / FGSC 9003) (Inky cap fungus).